A 275-amino-acid polypeptide reads, in one-letter code: 4-hydroxy-3-methylbut-2-enyl diphosphate reductase (275 aa).

[4Fe-4S] cluster is bound at residue Cys12. (2E)-4-hydroxy-3-methylbut-2-enyl diphosphate-binding residues include His40 and His70. 2 residues coordinate dimethylallyl diphosphate: His40 and His70. 2 residues coordinate isopentenyl diphosphate: His40 and His70. Cys92 contacts [4Fe-4S] cluster. Residue His119 coordinates (2E)-4-hydroxy-3-methylbut-2-enyl diphosphate. A dimethylallyl diphosphate-binding site is contributed by His119. His119 serves as a coordination point for isopentenyl diphosphate. Glu121 functions as the Proton donor in the catalytic mechanism. (2E)-4-hydroxy-3-methylbut-2-enyl diphosphate is bound at residue Thr151. Cys181 is a binding site for [4Fe-4S] cluster. (2E)-4-hydroxy-3-methylbut-2-enyl diphosphate contacts are provided by Ser209, Ser210, Asn211, and Ser251. Residues Ser209, Ser210, Asn211, and Ser251 each coordinate dimethylallyl diphosphate. Ser209, Ser210, Asn211, and Ser251 together coordinate isopentenyl diphosphate.

The protein belongs to the IspH family. It depends on [4Fe-4S] cluster as a cofactor.

The catalysed reaction is isopentenyl diphosphate + 2 oxidized [2Fe-2S]-[ferredoxin] + H2O = (2E)-4-hydroxy-3-methylbut-2-enyl diphosphate + 2 reduced [2Fe-2S]-[ferredoxin] + 2 H(+). The enzyme catalyses dimethylallyl diphosphate + 2 oxidized [2Fe-2S]-[ferredoxin] + H2O = (2E)-4-hydroxy-3-methylbut-2-enyl diphosphate + 2 reduced [2Fe-2S]-[ferredoxin] + 2 H(+). The protein operates within isoprenoid biosynthesis; dimethylallyl diphosphate biosynthesis; dimethylallyl diphosphate from (2E)-4-hydroxy-3-methylbutenyl diphosphate: step 1/1. It participates in isoprenoid biosynthesis; isopentenyl diphosphate biosynthesis via DXP pathway; isopentenyl diphosphate from 1-deoxy-D-xylulose 5-phosphate: step 6/6. In terms of biological role, catalyzes the conversion of 1-hydroxy-2-methyl-2-(E)-butenyl 4-diphosphate (HMBPP) into a mixture of isopentenyl diphosphate (IPP) and dimethylallyl diphosphate (DMAPP). Acts in the terminal step of the DOXP/MEP pathway for isoprenoid precursor biosynthesis. In Thermotoga sp. (strain RQ2), this protein is 4-hydroxy-3-methylbut-2-enyl diphosphate reductase.